Consider the following 393-residue polypeptide: tRNA(Met) cytidine acetate ligase (393 aa).

3 residues coordinate ATP: Gly81, Asn142, and Arg167.

This sequence belongs to the TmcAL family.

Its subcellular location is the cytoplasm. The catalysed reaction is cytidine(34) in elongator tRNA(Met) + acetate + ATP = N(4)-acetylcytidine(34) in elongator tRNA(Met) + AMP + diphosphate. In terms of biological role, catalyzes the formation of N(4)-acetylcytidine (ac(4)C) at the wobble position of elongator tRNA(Met), using acetate and ATP as substrates. First activates an acetate ion to form acetyladenylate (Ac-AMP) and then transfers the acetyl group to tRNA to form ac(4)C34. The polypeptide is tRNA(Met) cytidine acetate ligase (Bacillus anthracis (strain A0248)).